A 541-amino-acid polypeptide reads, in one-letter code: Phosphatidylethanolamine transferase Mcr-1 (541 aa).

The Cytoplasmic portion of the chain corresponds to Met1–Ser14. Residues Pro15–Phe35 form a helical membrane-spanning segment. The Periplasmic portion of the chain corresponds to Asp36–Asn47. The chain crosses the membrane as a helical span at residues Leu48–Leu68. Residues Leu69 to Arg73 are Cytoplasmic-facing. Residues Tyr74–Thr94 form a helical membrane-spanning segment. At Asp95–Asn122 the chain is on the periplasmic side. A helical transmembrane segment spans residues Ala123–Val143. Residues Lys144 to Arg157 are Cytoplasmic-facing. The helical transmembrane segment at Leu158 to His178 threads the bilayer. Residues Tyr179–Arg541 lie on the Periplasmic side of the membrane. 2 residues coordinate Zn(2+): Glu246 and Thr285. Disulfide bonds link Cys281/Cys291, Cys356/Cys364, and Cys414/Cys422. Thr285 bears the Phosphothreonine mark. Asp465 and His466 together coordinate Zn(2+).

This sequence belongs to the phosphoethanolamine transferase family. As to quaternary structure, monomer. Post-translationally, phosphorylated at Thr-285; may represent an intermediate in the catalytic mechanism.

The protein localises to the cell inner membrane. The catalysed reaction is lipid A (E. coli) + a 1,2-diacyl-sn-glycero-3-phosphoethanolamine + H(+) = lipid A 4'-(2-aminoethyl diphosphate) (E. coli) + a 1,2-diacyl-sn-glycerol. With respect to regulation, EDTA may inhibit activity. May be inhibited by ethanolamine. Functionally, probably catalyzes the addition of a phosphoethanolamine moiety to lipid A. Phosphoethanolamine modification of lipid A confers polymyxin resistance. Confers resistance to polymyxin-type antibiotics such as colistin; in the E.coli strain W3110. In Escherichia coli, this protein is Phosphatidylethanolamine transferase Mcr-1 (mcr1).